The primary structure comprises 62 residues: Short neurotoxin C (62 aa).

Residues 1-16 (RRCFNQQSSQPQTNKS) show a composition bias toward polar residues. The tract at residues 1-21 (RRCFNQQSSQPQTNKSCPPGE) is disordered. 4 cysteine pairs are disulfide-bonded: C3-C24, C17-C41, C43-C54, and C55-C60.

It belongs to the three-finger toxin family. Short-chain subfamily. Type I alpha-neurotoxin sub-subfamily. In terms of tissue distribution, expressed by the venom gland.

Its subcellular location is the secreted. Its function is as follows. Binds to muscle nicotinic acetylcholine receptor (nAChR) and inhibit acetylcholine from binding to the receptor, thereby impairing neuromuscular transmission. The chain is Short neurotoxin C from Laticauda crockeri (Crocker's sea snake).